We begin with the raw amino-acid sequence, 261 residues long: MSDSISVIREKLNQVTSEHDPFFQKCMQDERKGVEKLLQTTRRKWEKEAQLRNKLEEMKQYETDLFQQGYKYIAGVDEVGRGPLAGPVVAAAVILPDDFSVVGINDSKQLSEAKRDALYETIQTEAIAVGVGIIEHNVIDQVNIYEATKLAMRAALDQLQPEPDFVLIDAMPLKYTEAELSLIKGDTKSISIAAASIIAKVTRDRLMQMYDEKYPGYDFANNMGYGTKKHLHGLDTIGICPIHRISFAPVKEAKLHFDSLK.

The 189-residue stretch at 71-259 (KYIAGVDEVG…VKEAKLHFDS (189 aa)) folds into the RNase H type-2 domain. Residues aspartate 77, glutamate 78, and aspartate 169 each contribute to the a divalent metal cation site.

It belongs to the RNase HII family. The cofactor is Mn(2+). Mg(2+) is required as a cofactor.

It localises to the cytoplasm. The enzyme catalyses Endonucleolytic cleavage to 5'-phosphomonoester.. Functionally, endonuclease that specifically degrades the RNA of RNA-DNA hybrids. The polypeptide is Ribonuclease HII (Listeria monocytogenes serotype 4a (strain HCC23)).